We begin with the raw amino-acid sequence, 108 residues long: MDIVKVCPELHIVMDVDSGLIAEMRKDILVVDLHPVEDEINKLAQYAKALENSLDPRNSPMKAYNGREGTYKLAGMFQGMFFGFWVTMAILVLVTILAVKMNLSLIGL.

A helical transmembrane segment spans residues 79-99 (GMFFGFWVTMAILVLVTILAV).

It belongs to the MtrB family. As to quaternary structure, the complex is composed of 8 subunits; MtrA, MtrB, MtrC, MtrD, MtrE, MtrF, MtrG and MtrH.

It is found in the cell membrane. The catalysed reaction is 5-methyl-5,6,7,8-tetrahydromethanopterin + coenzyme M + 2 Na(+)(in) = 5,6,7,8-tetrahydromethanopterin + methyl-coenzyme M + 2 Na(+)(out). It participates in one-carbon metabolism; methanogenesis from CO(2); methyl-coenzyme M from 5,10-methylene-5,6,7,8-tetrahydromethanopterin: step 2/2. In terms of biological role, part of a complex that catalyzes the formation of methyl-coenzyme M and tetrahydromethanopterin from coenzyme M and methyl-tetrahydromethanopterin. This is an energy-conserving, sodium-ion translocating step. This is Tetrahydromethanopterin S-methyltransferase subunit B from Methanococcus maripaludis (strain C7 / ATCC BAA-1331).